The primary structure comprises 141 residues: VLTEDDKNHVKGLWAHVHDHIDEIAADALTRMFLAHPASKTYFAHFDLSPDNAQIKAHGKKVANALNQAVAHLDDIKGTLSKLSELHAQQLRVDPVNFGFLRHCLEVSIAAHLHDHLKASVIVSLDKFLEEVCKDLVSKYR.

One can recognise a Globin domain in the interval 1 to 141 (VLTEDDKNHV…VCKDLVSKYR (141 aa)). Residue His58 coordinates O2. Residue His87 participates in heme b binding.

The protein belongs to the globin family. As to quaternary structure, the major hemoglobin component (HbIII) is a heterotetramer of two alpha-2 chains and two beta-1 chains. Red blood cells.

In terms of biological role, involved in oxygen transport from the lung to the various peripheral tissues. The protein is Hemoglobin subunit alpha-2 of Varanus albigularis (White-throated monitor).